We begin with the raw amino-acid sequence, 151 residues long: 3-hydroxyacyl-[acyl-carrier-protein] dehydratase FabZ (151 aa).

Residue His49 is part of the active site.

Belongs to the thioester dehydratase family. FabZ subfamily.

Its subcellular location is the cytoplasm. The catalysed reaction is a (3R)-hydroxyacyl-[ACP] = a (2E)-enoyl-[ACP] + H2O. Involved in unsaturated fatty acids biosynthesis. Catalyzes the dehydration of short chain beta-hydroxyacyl-ACPs and long chain saturated and unsaturated beta-hydroxyacyl-ACPs. This Bordetella bronchiseptica (strain ATCC BAA-588 / NCTC 13252 / RB50) (Alcaligenes bronchisepticus) protein is 3-hydroxyacyl-[acyl-carrier-protein] dehydratase FabZ.